The chain runs to 314 residues: RNA 2'-O-methyltransferase FBLL1 (314 aa).

Residues 1–59 show a composition bias toward gly residues; it reads MKPAGGRGGWGWGGGKGGSKGGDTGSGTKGGFGARTRGSSGGGRGRGRGGGGGGGGGGG. A disordered region spans residues 1–82; the sequence is MKPAGGRGGW…RRKKGITVSV (82 aa). The residue at position 7 (R7) is an Omega-N-methylarginine. Over residues 64-77 the composition is skewed to basic residues; sequence RGGPGKNKNRRKKG. S-adenosyl-L-methionine is bound by residues 166–167, 185–186, 210–211, and 230–233; these read TT, EF, DA, and DVAQ.

It belongs to the methyltransferase superfamily. Fibrillarin family. Component of a box C/D small nucleolar ribonucleoprotein (snoRNP) complex composed of FBLL1, SNU13/NHP2L1, NOP56 and NOP58 and a guide snoRNA which mediates 2'-hydroxyl ribose methylation in RNAs.

The protein localises to the nucleus. It is found in the nucleolus. It catalyses the reaction a ribonucleotide in RNA + S-adenosyl-L-methionine = a 2'-O-methylribonucleotide in RNA + S-adenosyl-L-homocysteine + H(+). In terms of biological role, S-adenosyl-L-methionine-dependent RNA methyltransferase that catalyzes 2'-hydroxyl ribose methylation in RNAs. Functions as part of box C/D small nucleolar ribonucleoprotein (snoRNP) complexes, where guide snoRNAs ensure methylation specificity through base pairing with RNA substrates. Exhibits broad substrate specificity, methylating multiple sites on ribosomal RNAs (rRNAs) and messenger RNAs (mRNAs) depending on the guide snoRNA incorporated in the complex. Specifically expressed in brain, it regulates the expression of GAP43 by stabilizing its mRNA through methylation and thereby plays an indirect role in neuronal differentiation. In Mus musculus (Mouse), this protein is RNA 2'-O-methyltransferase FBLL1.